Consider the following 130-residue polypeptide: Small ribosomal subunit protein uS8 (130 aa).

This sequence belongs to the universal ribosomal protein uS8 family. In terms of assembly, part of the 30S ribosomal subunit.

In terms of biological role, one of the primary rRNA binding proteins, it binds directly to 16S rRNA central domain where it helps coordinate assembly of the platform of the 30S subunit. In Methanothermococcus thermolithotrophicus (Methanococcus thermolithotrophicus), this protein is Small ribosomal subunit protein uS8.